We begin with the raw amino-acid sequence, 289 residues long: Mitochondrial fission regulator 1-like (289 aa).

The residue at position 27 (threonine 27) is a Phosphothreonine. Position 38 is a phosphoserine (serine 38). Phosphoserine; by AMPK is present on serine 100. Residues serine 107, serine 221, and serine 222 each carry the phosphoserine modification. Serine 235 is subject to Phosphoserine; by AMPK. A phosphoserine mark is found at serine 258 and serine 270.

The protein belongs to the MTFR1 family. Post-translationally, phosphorylated by AMPK. Upon stress, phosphorylation at Ser-100 and Ser-235 by AMPK is sufficient to induce mitochondrial fragmentation.

It localises to the mitochondrion outer membrane. Its function is as follows. Mitochondrial protein required for adaptation of miochondrial dynamics to metabolic changes. Regulates mitochondrial morphology at steady state and mediates AMPK-dependent stress-induced mitochondrial fragmentation via the control of OPA1 levels. This is Mitochondrial fission regulator 1-like (Mtfr1l) from Mus musculus (Mouse).